Here is a 169-residue protein sequence, read N- to C-terminus: Cysteine synthase B (169 aa).

Residue Lys45 is modified to N6-(pyridoxal phosphate)lysine. Residue Asn75 coordinates pyridoxal 5'-phosphate. The tract at residues 146-169 (ANGDNPEAHYTSTGPEIWRQTGGT) is disordered.

Belongs to the cysteine synthase/cystathionine beta-synthase family. Pyridoxal 5'-phosphate is required as a cofactor.

It catalyses the reaction O-acetyl-L-serine + hydrogen sulfide = L-cysteine + acetate. It participates in amino-acid biosynthesis; L-cysteine biosynthesis; L-cysteine from L-serine: step 2/2. In Pseudomonas syringae pv. syringae, this protein is Cysteine synthase B (cysM).